The chain runs to 186 residues: Elongation factor P (186 aa).

This sequence belongs to the elongation factor P family.

It localises to the cytoplasm. The protein operates within protein biosynthesis; polypeptide chain elongation. In terms of biological role, involved in peptide bond synthesis. Stimulates efficient translation and peptide-bond synthesis on native or reconstituted 70S ribosomes in vitro. Probably functions indirectly by altering the affinity of the ribosome for aminoacyl-tRNA, thus increasing their reactivity as acceptors for peptidyl transferase. This Prochlorococcus marinus (strain MIT 9303) protein is Elongation factor P.